Here is a 569-residue protein sequence, read N- to C-terminus: Hexose transporter HXT8 (569 aa).

The segment at 1–38 (MTDRKTNLPEEPIFEEAEDDGCPSIENSSHLSVPTVEE) is disordered. The Cytoplasmic segment spans residues 1 to 61 (MTDRKTNLPE…EVVVPEKPAS (61 aa)). The span at 12 to 21 (PIFEEAEDDG) shows a compositional bias: acidic residues. A helical membrane pass occupies residues 62–82 (AYATVSIMCLCMAFGGFMSGW). The Extracellular segment spans residues 83–118 (DTGTISGFVNQTDFLRRFGNYSHSKNTYYLSNVRTG). N-linked (GlcNAc...) asparagine glycosylation is found at N92 and N102. Residues 119-139 (LIVSIFNVGSAIGCLFLSKLG) form a helical membrane-spanning segment. The Cytoplasmic portion of the chain corresponds to 140 to 145 (DIYGRC). A helical transmembrane segment spans residues 146–166 (MGLIIVIVVYMVGIVIQIASI). The Extracellular segment spans residues 167 to 176 (DKWYQYFIGR). The chain crosses the membrane as a helical span at residues 177 to 197 (IIAGIGAGSISVLAPMLISET). The Cytoplasmic portion of the chain corresponds to 198–203 (APKHIR). Residues 204-224 (GTLLACWQLMVTFAIFLGYCT) form a helical membrane-spanning segment. Over 225–238 (NYGTKTYSNSVQWR) the chain is Extracellular. A helical membrane pass occupies residues 239 to 259 (VPLGLCFAWAIIMIGGMTFVP). Residues 260 to 342 (ESPRFLVQVG…INSLQQLTGD (83 aa)) are Cytoplasmic-facing. Residues 343–359 (NYFFYYGTTIFKSVGMN) form a helical membrane-spanning segment. Residues 360–365 (DSFETS) are Extracellular-facing. The helical transmembrane segment at 366-383 (IVLGIVNFASCFFSLYSV) threads the bilayer. The Cytoplasmic segment spans residues 384 to 390 (DKLGRRR). Residues 391–411 (CLLLGAATMTACMVIYASVGV) traverse the membrane as a helical segment. At 412 to 433 (TRLYPNGKSEPSSKGAGNCTIV) the chain is on the extracellular side. N429 carries N-linked (GlcNAc...) asparagine glycosylation. A helical membrane pass occupies residues 434 to 454 (FTCFYIFCFSCTWGPVCYVII). Residues 455–471 (SETFPLRVRSKCMSVAT) lie on the Cytoplasmic side of the membrane. Residues 472 to 492 (AANLLWGFLIGFFTPFITSAI) traverse the membrane as a helical segment. A topological domain (extracellular) is located at residue N493. Residues 494 to 514 (FYYGYVFMGCLAFSYFYVFFF) form a helical membrane-spanning segment. The Cytoplasmic segment spans residues 515 to 569 (VPETKGLTLEEVDEMWMDGVLPWKSESWVPASRRDGDYDNEKLQHDEKPFYKRMF).

The protein belongs to the major facilitator superfamily. Sugar transporter (TC 2.A.1.1) family.

Its subcellular location is the membrane. Its function is as follows. Probable glucose transporter. This chain is Hexose transporter HXT8 (HXT8), found in Saccharomyces cerevisiae (strain ATCC 204508 / S288c) (Baker's yeast).